The sequence spans 547 residues: MLSLTAHDIPWAAGATLLAWAAYKIGRILLLPYTSPLRGLPGPPASSWLFGNVNELMGTEDFALYSEWLEKYGPTMKLNSWFKIPKLFTIDTRAMNYVLSHSQEYPKPERSRHNLVQILGNGLVVAEGELHRRERRIMNPAFGPAQIRELTEIFVEKSQQLRDIWWNDVAIRGGSARIDIQSGLTKMTLDVIGLAGFNYEFNALNPDGKPNELNAAFEVMFEYLSNLRKSYWLIIRSRFPILRCIPDGYSRRTAAAHKVTRRIGLQLIAEKKAALKQMAQSGEKTAGTALKSRDLLTLLIKANTSPDIPEDQRLSDEDVLAQVPTFLVAGHETTSNATTWCLYALAQRLDVQRKLREELREVPVDNPSMDQLNALPYLDAVIRETMRLYPPVVAGIRIASKDDEIPLAVPYMDAHGRMHDTVRIDKGTTFPIPILGVNMSKALWGEDAREFKPERWESVPEAVQPIPGVWSNLMTFIGGPRACIGYRFSLVEMKALIFTLVRAFEFEMAVPIEDITRKIGLVQRPFVRSEMEKGTQMPLIVKQHVRL.

The chain crosses the membrane as a helical span at residues 9-25 (IPWAAGATLLAWAAYKI). N-linked (GlcNAc...) asparagine glycosylation is found at Asn336 and Asn438. Cys483 is a heme binding site.

This sequence belongs to the cytochrome P450 family. The cofactor is heme.

The protein resides in the membrane. The protein operates within secondary metabolite biosynthesis. Its function is as follows. Cytochrome P450 monooxygenase that is able to use 7-ethoxycoumarin and testosterone as substrates for oxidation. This is Cytochrome P450 monooxygenase 128 from Postia placenta (strain ATCC 44394 / Madison 698-R) (Brown rot fungus).